Consider the following 316-residue polypeptide: Very-long-chain 3-oxooacyl-coA reductase let-767 (316 aa).

NADP(+) contacts are provided by residues 47-76 and aspartate 106; that span reads ASWA…NVLL. Position 189 (serine 189) interacts with substrate. Tyrosine 202 functions as the Proton acceptor in the catalytic mechanism. Lysine 206 is a binding site for NADP(+).

The protein belongs to the short-chain dehydrogenases/reductases (SDR) family. 17-beta-HSD 3 subfamily. In terms of tissue distribution, expressed in the gut of larva and adult.

The catalysed reaction is a very-long-chain (3R)-3-hydroxyacyl-CoA + NADP(+) = a very-long-chain 3-oxoacyl-CoA + NADPH + H(+). The enzyme catalyses (omega-1)-methyl-(3R)-hydroxy-fatty acyl-CoA + NADP(+) = (omega-1)-methyl-3-oxo-fatty acyl-CoA + NADPH + H(+). It catalyses the reaction a 17beta-hydroxy steroid + NADP(+) = a 17-oxo steroid + NADPH + H(+). It functions in the pathway lipid metabolism; fatty acid biosynthesis. Required for branched-chain fatty acid synthesis (such as (omega-1)-methyl-fatty acids). Catalyzes the reduction of the 3-keto-fatty acyl-CoA intermediate that is formed in each cycle of fatty acid elongation. Very long-chain fatty acids (VLCFAs) serve as precursors for ceramide and sphingolipids. Involved in hormone production as it metabolizes 4-androstendione (androst-4-ene-3,17-dione) into testosterone and estrone into estradiol (17beta-estradiol) in vitro, but the physiological steroid substrate is unknown. This chain is Very-long-chain 3-oxooacyl-coA reductase let-767 (let-767), found in Caenorhabditis elegans.